The following is a 446-amino-acid chain: NADH-dependent phenylglyoxylate dehydrogenase subunit beta (446 aa).

4Fe-4S ferredoxin-type domains are found at residues 6–35 (STIA…TDDI), 49–80 (ADKT…KDGT), 82–111 (GVIG…LDEA), and 109–141 (DEAT…HITT).

Dimer of heteropentamers composed of an alpha (PadG), a beta (PadI), a gamma (PadE), a delta (PadF) and an epsilon (PadH) subunit. [4Fe-4S] cluster serves as cofactor.

It catalyses the reaction phenylglyoxylate + NAD(+) + CoA = benzoyl-CoA + CO2 + NADH. Activated by magnesium ions and thiamine diphosphate. In terms of biological role, involved in the anaerobic metabolism of phenylalanine and phenylacetate. Catalyzes the oxidative decarboxylation of phenylglyoxylate to benzoyl-CoA and CO(2). It can also react slowly with 2-oxo-3-methylbutanoate and use different electron acceptors such as benzyl viologen, methyl viologen, FAD or FMN, but NAD seems to be the physiological electron acceptor. Also catalyzes an isotope exchange between CO(2) and the carboxyl group which proves partial or complete reversibility of the oxidative decarboxylation reaction. The protein is NADH-dependent phenylglyoxylate dehydrogenase subunit beta (padI) of Aromatoleum evansii (Azoarcus evansii).